We begin with the raw amino-acid sequence, 199 residues long: ATP-dependent Clp protease proteolytic subunit (199 aa).

S99 serves as the catalytic Nucleophile. H124 is a catalytic residue.

The protein belongs to the peptidase S14 family. Fourteen ClpP subunits assemble into 2 heptameric rings which stack back to back to give a disk-like structure with a central cavity, resembling the structure of eukaryotic proteasomes.

The protein resides in the cytoplasm. The enzyme catalyses Hydrolysis of proteins to small peptides in the presence of ATP and magnesium. alpha-casein is the usual test substrate. In the absence of ATP, only oligopeptides shorter than five residues are hydrolyzed (such as succinyl-Leu-Tyr-|-NHMec, and Leu-Tyr-Leu-|-Tyr-Trp, in which cleavage of the -Tyr-|-Leu- and -Tyr-|-Trp bonds also occurs).. Cleaves peptides in various proteins in a process that requires ATP hydrolysis. Has a chymotrypsin-like activity. Plays a major role in the degradation of misfolded proteins. The chain is ATP-dependent Clp protease proteolytic subunit from Lactococcus lactis subsp. lactis (strain IL1403) (Streptococcus lactis).